The chain runs to 447 residues: Probable tRNA methyltransferase 9B (447 aa).

Ser212 bears the Phosphoserine mark. Disordered regions lie at residues 274 to 306 (AWANSTVSQQPSRHPSLDLHAPEPFSTKGPNLD) and 320 to 348 (WLRTPGTSDNFSGHKGGGSRRKEGGNFLD). Positions 276–286 (ANSTVSQQPSR) are enriched in polar residues.

It belongs to the methyltransferase superfamily.

Functionally, may modify wobble uridines in specific arginine and glutamic acid tRNAs. Acts as a tumor suppressor by promoting the expression of LIN9. The sequence is that of Probable tRNA methyltransferase 9B (Trmt9b) from Mus musculus (Mouse).